A 601-amino-acid polypeptide reads, in one-letter code: COP9 signalosome complex subunit 1 (601 aa).

Acidic residues predominate over residues 1–10 (MQNELLDDPM). Disordered stretches follow at residues 1-54 (MQNE…LDNP) and 268-294 (DADD…PYMV). Residues 14–24 (APAAEAAAADE) show a composition bias toward low complexity. The 163-residue stretch at 338–500 (TILQIKTECL…GIVRILDERD (163 aa)) folds into the PCI domain. The disordered stretch occupies residues 535-581 (SISDKETRPKRKNQKESAKFDRNFGGIDVDEDPRGIAGPSGLSDDFN).

The protein belongs to the CSN1 family. In terms of assembly, component of the CSN complex, probably composed of csn-1, csn-2, csn-3, csn-4, csn-5, csn-6 and csn-7. Within the complex it probably interacts directly with csn-2, csn-4 and csn-5. May interact with itself. Interacts with rbx-1.

It is found in the cytoplasm. Its subcellular location is the nucleus. Its function is as follows. Essential component of the COP9 signalosome complex (CSN), a complex involved in various cellular and developmental processes. The CSN complex is an essential regulator of the ubiquitin (Ubl) conjugation pathway by mediating the deneddylation of the cullin subunits of the SCF-type E3 ligase complexes, leading to decrease the Ubl ligase activity of SCF. The CSN complex plays an essential role in embryogenesis and oogenesis and is required to regulate microtubule stability in the early embryo. Mediates mei-3/katanin targeting for degradation at the meiosis to mitosis transition via deneddylation of cul-3. The polypeptide is COP9 signalosome complex subunit 1 (csn-1) (Caenorhabditis elegans).